The following is a 173-amino-acid chain: MRNPFSLFNLPVQFQIDNAQLSERYLALQKQFHPDNFANESADKQLAALQQSADVNEALQILKDPIARATAIIEINTGIVKNLEENSRQDLDFLMQHMEWHEKLDSIENSRSEQQLAGFLKQIKTEQRNVEQQLATLLNQQQWQKADLLTERLRYFKKLIIQIEKVEEKLLEY.

Residues 3–75 form the J domain; that stretch reads NPFSLFNLPV…IARATAIIEI (73 aa).

This sequence belongs to the HscB family. Interacts with HscA and stimulates its ATPase activity.

Functionally, co-chaperone involved in the maturation of iron-sulfur cluster-containing proteins. Seems to help targeting proteins to be folded toward HscA. This chain is Co-chaperone protein HscB homolog, found in Haemophilus ducreyi (strain 35000HP / ATCC 700724).